Here is a 174-residue protein sequence, read N- to C-terminus: Late lactation protein B (174 aa).

The N-terminal stretch at 1 to 18 (MKVLFLTIALSLFSILQA) is a signal peptide. Cys-77 and Cys-169 form a disulfide bridge.

It belongs to the calycin superfamily. Lipocalin family. In terms of tissue distribution, mammary gland specific. Secreted in milk.

Its subcellular location is the secreted. Probably serves a role in the transport of a small ligand released during the hydrolysis of milk fat. In Notamacropus eugenii (Tammar wallaby), this protein is Late lactation protein B (LLPB).